Here is a 161-residue protein sequence, read N- to C-terminus: Phosphopantetheine adenylyltransferase (161 aa).

S11 serves as a coordination point for substrate. ATP contacts are provided by residues 11–12 (SF) and H19. K43, L75, and R89 together coordinate substrate. ATP contacts are provided by residues 90-92 (GLR), E100, and 125-131 (YSFISSS).

Belongs to the bacterial CoaD family. Homohexamer. Requires Mg(2+) as cofactor.

It is found in the cytoplasm. The enzyme catalyses (R)-4'-phosphopantetheine + ATP + H(+) = 3'-dephospho-CoA + diphosphate. Its pathway is cofactor biosynthesis; coenzyme A biosynthesis; CoA from (R)-pantothenate: step 4/5. Functionally, reversibly transfers an adenylyl group from ATP to 4'-phosphopantetheine, yielding dephospho-CoA (dPCoA) and pyrophosphate. The polypeptide is Phosphopantetheine adenylyltransferase (Staphylococcus carnosus (strain TM300)).